Here is a 274-residue protein sequence, read N- to C-terminus: Large ribosomal subunit protein uL2 (274 aa).

The disordered stretch occupies residues 223–274; that stretch reads VAMNPVDHPMGGGEGKASGGHPRSRTGLYAKGKKTRNTNKYSKNYILSRKKR.

Belongs to the universal ribosomal protein uL2 family. Part of the 50S ribosomal subunit. Forms a bridge to the 30S subunit in the 70S ribosome.

Functionally, one of the primary rRNA binding proteins. Required for association of the 30S and 50S subunits to form the 70S ribosome, for tRNA binding and peptide bond formation. It has been suggested to have peptidyltransferase activity; this is somewhat controversial. Makes several contacts with the 16S rRNA in the 70S ribosome. The sequence is that of Large ribosomal subunit protein uL2 from Amoebophilus asiaticus (strain 5a2).